A 76-amino-acid chain; its full sequence is Pigment-dispersing hormone A peptides (76 aa).

The N-terminal stretch at 1 to 20 (MRSAMVVLVLVAMVAVFTRA) is a signal peptide. Ala-73 is modified (alanine amide).

It belongs to the arthropod PDH family. In terms of tissue distribution, optical ganglia of the eyestalk.

The protein resides in the secreted. Its function is as follows. The pigment-dispersing hormone causes the migration of the distal retinal pigment into the proximal end of the pigment chromatophore cells and thus decreases the amount of light entering the retinulas. May also function as a neurotransmitter and/or neuromodulator. In Faxonius limosus (Spinycheek crayfish), this protein is Pigment-dispersing hormone A peptides.